A 248-amino-acid polypeptide reads, in one-letter code: DNA polymerase sliding clamp 2 (248 aa).

It belongs to the PCNA family. In terms of assembly, homotrimer. The subunits circularize to form a toroid; DNA passes through its center. Replication factor C (RFC) is required to load the toroid on the DNA.

In terms of biological role, sliding clamp subunit that acts as a moving platform for DNA processing. Responsible for tethering the catalytic subunit of DNA polymerase and other proteins to DNA during high-speed replication. The polypeptide is DNA polymerase sliding clamp 2 (Sulfurisphaera ohwakuensis).